The primary structure comprises 379 residues: Lipid-A-disaccharide synthase (379 aa).

It belongs to the LpxB family.

It carries out the reaction a lipid X + a UDP-2-N,3-O-bis[(3R)-3-hydroxyacyl]-alpha-D-glucosamine = a lipid A disaccharide + UDP + H(+). Its pathway is bacterial outer membrane biogenesis; LPS lipid A biosynthesis. Its function is as follows. Condensation of UDP-2,3-diacylglucosamine and 2,3-diacylglucosamine-1-phosphate to form lipid A disaccharide, a precursor of lipid A, a phosphorylated glycolipid that anchors the lipopolysaccharide to the outer membrane of the cell. The sequence is that of Lipid-A-disaccharide synthase from Pseudomonas fluorescens (strain SBW25).